A 447-amino-acid polypeptide reads, in one-letter code: Tubulin beta-1 chain (447 aa).

Residues Gln-11, Glu-69, Ser-138, Gly-142, Thr-143, Gly-144, Asn-204, and Asn-226 each contribute to the GTP site. Mg(2+) is bound at residue Glu-69. Positions 428-447 (ATADEDAEFDEEQEQEIEDN) are disordered. The span at 429–447 (TADEDAEFDEEQEQEIEDN) shows a compositional bias: acidic residues.

The protein belongs to the tubulin family. In terms of assembly, dimer of alpha and beta chains. A typical microtubule is a hollow water-filled tube with an outer diameter of 25 nm and an inner diameter of 15 nM. Alpha-beta heterodimers associate head-to-tail to form protofilaments running lengthwise along the microtubule wall with the beta-tubulin subunit facing the microtubule plus end conferring a structural polarity. Microtubules usually have 13 protofilaments but different protofilament numbers can be found in some organisms and specialized cells. Mg(2+) serves as cofactor.

It localises to the cytoplasm. The protein resides in the cytoskeleton. Functionally, tubulin is the major constituent of microtubules, a cylinder consisting of laterally associated linear protofilaments composed of alpha- and beta-tubulin heterodimers. Microtubules grow by the addition of GTP-tubulin dimers to the microtubule end, where a stabilizing cap forms. Below the cap, tubulin dimers are in GDP-bound state, owing to GTPase activity of alpha-tubulin. This Manduca sexta (Tobacco hawkmoth) protein is Tubulin beta-1 chain.